Consider the following 412-residue polypeptide: Histidine--tRNA ligase (412 aa).

It belongs to the class-II aminoacyl-tRNA synthetase family. Homodimer.

The protein resides in the cytoplasm. It carries out the reaction tRNA(His) + L-histidine + ATP = L-histidyl-tRNA(His) + AMP + diphosphate + H(+). The sequence is that of Histidine--tRNA ligase from Rickettsia typhi (strain ATCC VR-144 / Wilmington).